We begin with the raw amino-acid sequence, 93 residues long: YcgL domain-containing protein VFMJ11_1829 (93 aa).

A YcgL domain is found at 1–84 (MFCSIYKSTK…PPENLLEKYK (84 aa)).

This chain is YcgL domain-containing protein VFMJ11_1829, found in Aliivibrio fischeri (strain MJ11) (Vibrio fischeri).